Reading from the N-terminus, the 625-residue chain is E3 ubiquitin-protein ligase synoviolin (625 aa).

Residues 1 to 4 lie on the Cytoplasmic side of the membrane; sequence MVRA. The helical transmembrane segment at 5 to 25 threads the bilayer; that stretch reads ALVTATSLALTGAVVAHAYFL. Over 26-40 the chain is Lumenal; sequence KHQFYPTVVYLTKSS. A helical membrane pass occupies residues 41–61; that stretch reads PSMAVLYIQAFVLVFLLGKLM. Over 62 to 98 the chain is Cytoplasmic; that stretch reads RKVFFGQLRAAEMEHLIERSWYAVTETCLAFTVFRDD. A helical transmembrane segment spans residues 99 to 119; that stretch reads FSPRFVALFTLLLFLKCFHWL. Over 120-135 the chain is Lumenal; that stretch reads AEDRVDFMERSPNISW. The helical transmembrane segment at 136-156 threads the bilayer; it reads VFHFRVLSLMVLLGVMDFLFV. Residues 157 to 169 lie on the Cytoplasmic side of the membrane; it reads NHACHSIITRGAS. The helical transmembrane segment at 170-190 threads the bilayer; that stretch reads VQLVFGFEYAILMTMVLTTFI. Over 191–212 the chain is Lumenal; the sequence is KYTLHTIDLQSENPWDNKAVYM. A helical transmembrane segment spans residues 213–235; the sequence is LYTELFTGFIKVLLYMAFMTIMI. Positions 236–270 are interaction with p53/TP53; the sequence is KVHTFPLFAIRPMYLAMRQFKKAVTDAIMSRRAIR. Topologically, residues 236 to 625 are cytoplasmic; it reads KVHTFPLFAI…GNLLKLASVN (390 aa). 8 residues coordinate Zn(2+): Cys-291, Cys-294, Cys-307, His-309, His-312, Cys-315, Cys-326, and Cys-329. The RING-type; atypical zinc-finger motif lies at 291–330; sequence CIICREEMVTGAKKLPCNHIFHSSCLRSWFQRQQTCPTCR. Disordered stretches follow at residues 337 to 361, 390 to 434, 462 to 487, and 523 to 625; these read SQPN…NAPI, PPPA…SAAP, FMSS…LEQE, and LSPP…ASVN. The segment covering 342–361 has biased composition (pro residues); the sequence is TPAPPAAQAPAPPAPANAPI. The span at 423-434 shows a compositional bias: low complexity; the sequence is AQSTAEAASAAP. Over residues 462-471 the composition is skewed to pro residues; sequence FMSSMPPPPS. The segment covering 523 to 564 has biased composition (polar residues); it reads LSPPRSETNTGETSESANVESSPSTANTETAGQEIQSQSGES.

This sequence belongs to the HRD1 family. Homodimer.

The protein resides in the endoplasmic reticulum membrane. The enzyme catalyses S-ubiquitinyl-[E2 ubiquitin-conjugating enzyme]-L-cysteine + [acceptor protein]-L-lysine = [E2 ubiquitin-conjugating enzyme]-L-cysteine + N(6)-ubiquitinyl-[acceptor protein]-L-lysine.. It participates in protein modification; protein ubiquitination. Its function is as follows. E3 ubiquitin-protein ligase which accepts ubiquitin specifically from endoplasmic reticulum-associated UBC7 E2 ligase and transfers it to substrates, promoting their degradation. Component of the endoplasmic reticulum quality control (ERQC) system also called ER-associated degradation (ERAD) involved in ubiquitin-dependent degradation of misfolded endoplasmic reticulum proteins. Also promotes the degradation of normal but naturally short-lived proteins. Protects cells from ER stress-induced apoptosis. Sequesters p53 in the cytoplasm and promotes its degradation, thereby negatively regulating its biological function in transcription, cell cycle regulation and apoptosis. The sequence is that of E3 ubiquitin-protein ligase synoviolin (syvn1) from Danio rerio (Zebrafish).